Consider the following 268-residue polypeptide: AN1-type zinc finger protein 1 (268 aa).

Alanine 2 carries the N-acetylalanine modification. 2 consecutive AN1-type zinc fingers follow at residues 4 to 52 and 58 to 106; these read LDIG…VINE and QHTS…IPKP. Residues cysteine 10, cysteine 15, cysteine 25, cysteine 28, cysteine 33, histidine 36, histidine 42, cysteine 44, cysteine 64, cysteine 69, cysteine 79, cysteine 82, cysteine 87, histidine 90, histidine 96, and cysteine 98 each coordinate Zn(2+). A ubiquitin-like region spans residues 160–260; the sequence is QTERIYFQVF…EYLNDEEQFC (101 aa).

Associates with the 26S proteasome; this association occurs upon exposure to arsenite and is reduced in the presence of ATP. Interacts (via AN1-type 1 and 2 zinc fingers) with PSMD1; this interaction is increased upon arsenite treatment and occurs in an ATP-independent manner. Interacts with PSMC4. Interacts with PSMA1. Interacts (via its ubiquitin-like region) with VCP; this interaction occurs in an arsenite-dependent manner and is necessary for the recruitment of the ubiquitin-selective ATPase VCP to stress granules (SGs).

Its subcellular location is the cytoplasm. The protein localises to the stress granule. Plays a role in the regulation of cytoplasmic stress granules (SGs) turnover. SGs are dynamic and transient cytoplasmic ribonucleoprotein assemblies important for cellular protein homeostasis when protein production is suspended after acute exogenous stress. Associates with SGs and is involved in the efficient and specific arsenite-induced clearance process of SGs through the recruitment of the ubiquitin-selective ATPase VCP and the 26S proteasome. This process requires both complexes for efficient degradation of damaged ubiquitinated SG proteins during recovery from arsenite stress, and hence avoiding aberrant cytoplasmic SGs degradation via autophagy. The polypeptide is AN1-type zinc finger protein 1 (Homo sapiens (Human)).